Reading from the N-terminus, the 456-residue chain is Bifunctional protein GlmU (456 aa).

The segment at 1–228 (MPQNTLNTVI…SHLAAGVNNK (228 aa)) is pyrophosphorylase. Residues 11 to 14 (LAAG), lysine 25, glutamine 75, 80 to 81 (GT), 102 to 104 (YGD), glycine 138, glutamate 153, asparagine 168, and asparagine 226 contribute to the UDP-N-acetyl-alpha-D-glucosamine site. A Mg(2+)-binding site is contributed by aspartate 104. Asparagine 226 contacts Mg(2+). The linker stretch occupies residues 229-249 (RQLAELERIFQTEQAQELLKA). Positions 250 to 456 (GVTLRDPARF…GWMRPEKDKQ (207 aa)) are N-acetyltransferase. UDP-N-acetyl-alpha-D-glucosamine is bound by residues arginine 332 and lysine 350. The active-site Proton acceptor is the histidine 362. 2 residues coordinate UDP-N-acetyl-alpha-D-glucosamine: tyrosine 365 and asparagine 376. Acetyl-CoA-binding positions include alanine 379, 385-386 (NY), serine 404, alanine 422, and arginine 439.

The protein in the N-terminal section; belongs to the N-acetylglucosamine-1-phosphate uridyltransferase family. In the C-terminal section; belongs to the transferase hexapeptide repeat family. Homotrimer. The cofactor is Mg(2+).

Its subcellular location is the cytoplasm. The catalysed reaction is alpha-D-glucosamine 1-phosphate + acetyl-CoA = N-acetyl-alpha-D-glucosamine 1-phosphate + CoA + H(+). It carries out the reaction N-acetyl-alpha-D-glucosamine 1-phosphate + UTP + H(+) = UDP-N-acetyl-alpha-D-glucosamine + diphosphate. Its pathway is nucleotide-sugar biosynthesis; UDP-N-acetyl-alpha-D-glucosamine biosynthesis; N-acetyl-alpha-D-glucosamine 1-phosphate from alpha-D-glucosamine 6-phosphate (route II): step 2/2. It functions in the pathway nucleotide-sugar biosynthesis; UDP-N-acetyl-alpha-D-glucosamine biosynthesis; UDP-N-acetyl-alpha-D-glucosamine from N-acetyl-alpha-D-glucosamine 1-phosphate: step 1/1. The protein operates within bacterial outer membrane biogenesis; LPS lipid A biosynthesis. Its function is as follows. Catalyzes the last two sequential reactions in the de novo biosynthetic pathway for UDP-N-acetylglucosamine (UDP-GlcNAc). The C-terminal domain catalyzes the transfer of acetyl group from acetyl coenzyme A to glucosamine-1-phosphate (GlcN-1-P) to produce N-acetylglucosamine-1-phosphate (GlcNAc-1-P), which is converted into UDP-GlcNAc by the transfer of uridine 5-monophosphate (from uridine 5-triphosphate), a reaction catalyzed by the N-terminal domain. This is Bifunctional protein GlmU from Neisseria gonorrhoeae (strain ATCC 700825 / FA 1090).